The primary structure comprises 637 residues: 1-deoxy-D-xylulose-5-phosphate synthase (637 aa).

Residues histidine 73 and 113–115 each bind thiamine diphosphate; that span reads SHA. Aspartate 144 lines the Mg(2+) pocket. Residues 145 to 146, asparagine 174, tyrosine 285, and glutamate 366 contribute to the thiamine diphosphate site; that span reads GA. Asparagine 174 lines the Mg(2+) pocket.

This sequence belongs to the transketolase family. DXPS subfamily. Homodimer. The cofactor is Mg(2+). Thiamine diphosphate is required as a cofactor.

It carries out the reaction D-glyceraldehyde 3-phosphate + pyruvate + H(+) = 1-deoxy-D-xylulose 5-phosphate + CO2. The protein operates within metabolic intermediate biosynthesis; 1-deoxy-D-xylulose 5-phosphate biosynthesis; 1-deoxy-D-xylulose 5-phosphate from D-glyceraldehyde 3-phosphate and pyruvate: step 1/1. Its function is as follows. Catalyzes the acyloin condensation reaction between C atoms 2 and 3 of pyruvate and glyceraldehyde 3-phosphate to yield 1-deoxy-D-xylulose-5-phosphate (DXP). In Streptomyces griseus subsp. griseus (strain JCM 4626 / CBS 651.72 / NBRC 13350 / KCC S-0626 / ISP 5235), this protein is 1-deoxy-D-xylulose-5-phosphate synthase.